The sequence spans 56 residues: MAAKGNREKIKLVSTAETGHFYTTTKNKRNMPEKMEIKKFDPVVRKHVVYKEAKIK.

Belongs to the bacterial ribosomal protein bL33 family.

This is Large ribosomal subunit protein bL33 from Glaesserella parasuis serovar 5 (strain SH0165) (Haemophilus parasuis).